We begin with the raw amino-acid sequence, 323 residues long: Arginase (323 aa).

Positions 119, 142, 144, and 146 each coordinate Mn(2+). Substrate-binding positions include 144–148 (HADIN), 155–157 (SKN), and D198. D247 and D249 together coordinate Mn(2+). Residues T261 and E292 each contribute to the substrate site.

The protein belongs to the arginase family. Homotrimer. Requires Mn(2+) as cofactor.

The catalysed reaction is L-arginine + H2O = urea + L-ornithine. It functions in the pathway nitrogen metabolism; urea cycle; L-ornithine and urea from L-arginine: step 1/1. The protein is Arginase (car1) of Schizosaccharomyces pombe (strain 972 / ATCC 24843) (Fission yeast).